The following is a 560-amino-acid chain: Vesicular glutamate transporter 1 (560 aa).

Residues 1–63 (MEFRQEEFRK…CTCFGLPRRY (63 aa)) are Cytoplasmic-facing. A helical transmembrane segment spans residues 64 to 84 (IIAIMSGLGFCISFGIRCNLG). Topologically, residues 85 to 116 (VAIVSMVNNSTTHRGGHVVMQKAQFNWDPETV) are extracellular. A helical transmembrane segment spans residues 117–137 (GLIHGSFFWGYIVTQIPGGFI). At 138 to 140 (CQK) the chain is on the cytoplasmic side. The chain crosses the membrane as a helical span at residues 141–161 (FAANRVFGFAIVATSTLNMLI). Topologically, residues 162-169 (PSAARVHY) are extracellular. Residues 170–190 (GCVIFVRILQGLVEGVTYPAC) form a helical membrane-spanning segment. The Cytoplasmic segment spans residues 191–208 (HGIWSKWAPPLERSRLAT). A helical membrane pass occupies residues 209–229 (TAFCGSYAGAVVAMPLAGVLV). At 230 to 236 (QYSGWSS) the chain is on the extracellular side. A helical transmembrane segment spans residues 237–257 (VFYVYGSFGIFWYLFWLLVSY). Residues 258 to 302 (ESPALHPSISEEERKYIEDAIGESAKLMNPVTKFNTPWRRFFTSM) lie on the Cytoplasmic side of the membrane. Residues 303–323 (PVYAIIVANFCRSWTFYLLLI) traverse the membrane as a helical segment. Residues 324 to 341 (SQPAYFEEVFGFEISKVG) are Extracellular-facing. A helical transmembrane segment spans residues 342-362 (LVSALPHLVMTIIVPIGGQIA). At 363 to 378 (DFLRSRRIMSTTNVRK) the chain is on the cytoplasmic side. The chain crosses the membrane as a helical span at residues 379 to 399 (LMNCGGFGMEATLLLVVGYSH). The Extracellular segment spans residues 400–401 (SK). A helical transmembrane segment spans residues 402 to 422 (GVAISFLVLAVGFSGFAISGF). Over 423-435 (NVNHLDIAPRYAS) the chain is Cytoplasmic. A helical membrane pass occupies residues 436-456 (ILMGISNGVGTLSGMVCPIIV). The Extracellular segment spans residues 457-469 (GAMTKHKTREEWQ). A helical transmembrane segment spans residues 470 to 490 (YVFLIASLVHYGGVIFYGVFA). Residues 491 to 560 (SGEKQPWAEP…PRPPPPVRDY (70 aa)) lie on the Cytoplasmic side of the membrane. The tract at residues 497-560 (WAEPEEMSEE…PRPPPPVRDY (64 aa)) is disordered. S504 is modified (phosphoserine). Over residues 520-529 (DESEMEDEAE) the composition is skewed to acidic residues. Composition is skewed to pro residues over residues 531–540 (PGAPPAPPPS) and 550–560 (PPRPPPPVRDY).

This sequence belongs to the major facilitator superfamily. Sodium/anion cotransporter family. VGLUT subfamily. In terms of assembly, interacts with SHANK3.

The protein resides in the cytoplasmic vesicle. It is found in the secretory vesicle. Its subcellular location is the synaptic vesicle membrane. It localises to the cell membrane. The protein localises to the synapse. The protein resides in the synaptosome. It carries out the reaction L-glutamate(out) = L-glutamate(in). The enzyme catalyses chloride(in) = chloride(out). The catalysed reaction is 3 Na(+)(out) + phosphate(out) = 3 Na(+)(in) + phosphate(in). It catalyses the reaction phosphate(in) = phosphate(out). It carries out the reaction K(+)(in) + H(+)(out) = K(+)(out) + H(+)(in). With respect to regulation, chloride channel activity is allosterically activated by lumenal H(+) and Cl(-) leading to synaptic vesicles acidification. The L-glutamate transport activity is allosterically activated by lumenal H(+) and Cl(-). The allosteric activation by H(+) efficiently prevents non-vesicular efflux across the plasma membrane, thereby restricting L-glutamate transport activity to acidic membranes such as synaptic vesicles. Multifunctional transporter that transports L-glutamate as well as multiple ions such as chloride, proton, potassium, sodium and phosphate. At the synaptic vesicle membrane, mainly functions as an uniporter which transports preferentially L-glutamate but also phosphate from the cytoplasm into synaptic vesicles at presynaptic nerve terminals of excitatory neural cells. The L-glutamate or phosphate uniporter activity is electrogenic and is driven by the proton electrochemical gradient, mainly by the electrical gradient established by the vacuolar H(+)-ATPase across the synaptic vesicle membrane. In addition, functions as a chloride channel that allows a chloride permeation through the synaptic vesicle membrane that affects the proton electrochemical gradient and promotes synaptic vesicles acidification. Moreover, may function as a K(+)/H(+) antiport allowing to maintain the electrical gradient and to decrease chemical gradient and therefore sustain vesicular glutamate uptake. The vesicular K(+)/H(+) antiport activity is electroneutral. At the plasma membrane, following exocytosis, functions as a symporter of Na(+) and phosphate from the extracellular space to the cytoplasm allowing synaptic phosphate homeostasis regulation. The symporter activity is driven by an inside negative membrane potential and is electrogenic. Is necessary for synaptic signaling of visual-evoked responses from photoreceptors. The sequence is that of Vesicular glutamate transporter 1 from Bos taurus (Bovine).